The following is a 232-amino-acid chain: Ribose-5-phosphate isomerase A (232 aa).

Substrate is bound by residues 28–31, 83–86, and 96–99; these read TGST, DGAD, and KGGG. Catalysis depends on E105, which acts as the Proton acceptor. K123 serves as a coordination point for substrate.

Belongs to the ribose 5-phosphate isomerase family. Homodimer.

It carries out the reaction aldehydo-D-ribose 5-phosphate = D-ribulose 5-phosphate. The protein operates within carbohydrate degradation; pentose phosphate pathway; D-ribose 5-phosphate from D-ribulose 5-phosphate (non-oxidative stage): step 1/1. In terms of biological role, catalyzes the reversible conversion of ribose-5-phosphate to ribulose 5-phosphate. The chain is Ribose-5-phosphate isomerase A from Rhizobium etli (strain CIAT 652).